The chain runs to 621 residues: Leucine aminopeptidase (621 aa).

A propeptide spanning residues 1–73 (MPLLRSSQHI…ISNRKEFRKM (73 aa)) is cleaved from the precursor. The interval 129–152 (SSSGGSGGNGGSAGSSGNGEGGAQ) is disordered. Gly residues predominate over residues 132-150 (GGSGGNGGSAGSSGNGEGG). A peptide is bound by residues Lys-390, Asp-395, and Lys-402. Zn(2+) is bound by residues Lys-390 and Asp-395. The segment at 400 to 417 (NLKAAPGSMIDLMKFDMS) is L13 loop. Lys-402 is a catalytic residue. Residues Asp-410, Met-412, Asp-415, Asp-475, and Glu-477 each contribute to the Zn(2+) site. Positions 415 and 475 each coordinate a peptide. The active site involves Arg-479.

This sequence belongs to the peptidase M17 family. Homohexamer composed of dimer of trimers. Both the identity and concentration of metal ions available dictate the extent to which oligomerization occurs; Mn(2+) and Co(2+) induces oligomerization, whereas Mg(2+) has no effect, and Zn(2+) causes irreversible protein aggregation in vitro. Zn(2+) is required as a cofactor.

It localises to the cytoplasm. The catalysed reaction is Release of an N-terminal amino acid, Xaa-|-Yaa-, in which Xaa is preferably Leu, but may be other amino acids including Pro although not Arg or Lys, and Yaa may be Pro. Amino acid amides and methyl esters are also readily hydrolyzed, but rates on arylamides are exceedingly low.. It catalyses the reaction L-cysteinylglycine + H2O = L-cysteine + glycine. Oligomerization is required for catalytic activity and is metal-dependent. The type of metal that binds the 2 metal binding sites influences catalytic activity and substrate specificity. In vitro, activated by Co(2+), Mn(2+), Ni(2+), Mg(2+) and Zn(2+) with decreasing strength. Occupancy of the site 2 is essential and sufficient for activating the enzyme but occupation of the 2 sites is necessary for full catalytic activity. Inhibited by Ca(2+). Inhibited by fungal metabolite bestatin. Functionally, aminopeptidase which preferentially cleaves leucine residues from the N-terminus of peptides. Also, has some activity towards tryptophan and methionine and has very low activity towards alanine, arginine, asparagine, phenylalanine and tyrosine. No activity towards histidine, serine, valine, isoleucine, glycine, aspartic acid and glutamic acid. In addition, cleaves the Cys-Gly dipeptide, probably as part of the glutathione regulation pathway; cleavage only occurs in the presence of Mn(2+). Plays a role in the final step of host hemoglobin catabolism, by cleaving hemoglobin-derived oligopeptides providing a source of amino acids for the parasite protein synthesis and for the maintenance of osmotic homeostasis. This Plasmodium vivax (strain Salvador I) protein is Leucine aminopeptidase.